A 479-amino-acid chain; its full sequence is PRAME family member 19 (479 aa).

Residues 15–38 (QSLLRDQALAISVLDELPRELFPR) form an LRR 1 repeat. The stretch at 97 to 124 (RWKLQVLEMRDVDENFWTIWSGARPLSC) is one LRR 1; degenerate repeat. An LRR 2; degenerate repeat occupies 179-203 (HLCCTKVVNYSMNILNFRNILETVY). One copy of the LRR 3; degenerate repeat lies at 204-230 (PDSIQVLEIWNMCWPCMVAEVSRYLSQ). The LRR 4; degenerate repeat unit spans residues 231–265 (MKNLRKLFISDGCGYLPSFESQGQLVAEFSSVFLR). 5 LRR repeats span residues 266–291 (LEYL…IRCL), 292–323 (KSPL…SQLK), 324–342 (QLNL…PLRA), 348–375 (AATL…ALSR), and 376–400 (CSNL…LLRH).

This sequence belongs to the PRAME family.

This is PRAME family member 19 from Homo sapiens (Human).